The primary structure comprises 75 residues: Small ribosomal subunit protein bS21B (75 aa).

The span at 33–52 shows a compositional bias: basic and acidic residues; that stretch reads RRSYEKPSERRAREKAEAVR. Positions 33–75 are disordered; that stretch reads RRSYEKPSERRAREKAEAVRRARKLARKQAQREGLLPGKKRAA.

The protein belongs to the bacterial ribosomal protein bS21 family.

The polypeptide is Small ribosomal subunit protein bS21B (Chelativorans sp. (strain BNC1)).